The sequence spans 282 residues: Pantothenate synthetase (282 aa).

ATP is bound at residue 30–37; that stretch reads MGALHAGH. H37 serves as the catalytic Proton donor. Position 61 (Q61) interacts with (R)-pantoate. Q61 contributes to the beta-alanine binding site. ATP is bound at residue 147–150; sequence GEKD. Q153 provides a ligand contact to (R)-pantoate. ATP contacts are provided by residues V176 and 184–187; that span reads LSSR.

Belongs to the pantothenate synthetase family. In terms of assembly, homodimer.

The protein localises to the cytoplasm. It carries out the reaction (R)-pantoate + beta-alanine + ATP = (R)-pantothenate + AMP + diphosphate + H(+). The protein operates within cofactor biosynthesis; (R)-pantothenate biosynthesis; (R)-pantothenate from (R)-pantoate and beta-alanine: step 1/1. Its function is as follows. Catalyzes the condensation of pantoate with beta-alanine in an ATP-dependent reaction via a pantoyl-adenylate intermediate. This is Pantothenate synthetase from Bacteroides fragilis (strain ATCC 25285 / DSM 2151 / CCUG 4856 / JCM 11019 / LMG 10263 / NCTC 9343 / Onslow / VPI 2553 / EN-2).